The sequence spans 20 residues: Putative serine protease (20 aa).

The protein belongs to the peptidase S1 family.

It localises to the secreted. Its function is as follows. Binds the A.niger cell wall component alpha-1,3-glucan, a fungal pathogen-associated molecular pattern (PAMP) that activates the host immune response. The chain is Putative serine protease from Galleria mellonella (Greater wax moth).